Here is a 1050-residue protein sequence, read N- to C-terminus: Nuclear pore complex-interacting protein family member B3 (1050 aa).

The helical transmembrane segment at 63 to 87 (VIIAFPTSYKVVITLWIVYLWVSLL) threads the bilayer. Disordered stretches follow at residues 241–262 (NRMG…NSLS), 290–574 (LTPL…NIKT), and 785–1050 (ERLR…RRLS). Positions 252-262 (QQHSITDNSLS) are enriched in polar residues. Pro residues predominate over residues 349–359 (PLPPSALPSAP). Composition is skewed to basic and acidic residues over residues 406-416 (DNIKTPAERLR), 448-458 (DNIKTPAERLR), 490-500 (DNIKTPAERLR), 528-538 (DNIKTPAERLR), 820-830 (DNIKTPAERLR), 862-872 (DNIKTPAERLR), and 904-914 (DNIKTPAERLR).

It belongs to the NPIP family.

Its subcellular location is the membrane. The protein is Nuclear pore complex-interacting protein family member B3 (NPIPB3) of Homo sapiens (Human).